A 285-amino-acid polypeptide reads, in one-letter code: MADITAALVKELRERTGAGMMECKKALVEAQGDIELAIDNMRKSGQAKAAKKAGRVAAEGVILTKIAQDGKYGVIIELNCETDFVAKDGGFKAFGDEVITAALNERITDVEALKAKFEEQRTALVAKISENINIRRLGVLEGGVLGSYLHGARIGVMVSAAGADEELVKHVAMHIAASKPEYVNADDVPADVVAREHQIQLDIAMQSGKPREIAEKMVEGRMRKFTGEISLTGQHFVMDPSKTVGQLLGEHGAKINNFIRFEVGEGIEKAEVDFAAEVAAMGKQF.

An involved in Mg(2+) ion dislocation from EF-Tu region spans residues 82 to 85; sequence TDFV.

The protein belongs to the EF-Ts family.

Its subcellular location is the cytoplasm. Functionally, associates with the EF-Tu.GDP complex and induces the exchange of GDP to GTP. It remains bound to the aminoacyl-tRNA.EF-Tu.GTP complex up to the GTP hydrolysis stage on the ribosome. This Sodalis glossinidius (strain morsitans) protein is Elongation factor Ts.